Here is a 669-residue protein sequence, read N- to C-terminus: GTP-binding protein 1 (669 aa).

Positions 1–32 (MAAERSRSPMESPVPASMFAPEPSSPGAARAA) are disordered. A phosphoserine mark is found at Ser-6, Ser-8, Ser-12, Ser-24, Ser-25, Ser-44, Ser-47, and Ser-69. In terms of domain architecture, tr-type G spans 158 to 389 (FLEVRVAVVG…LNLLSPRTSY (232 aa)). Residues 167–174 (GNVDAGKS) form a G1 region. GTP is bound at residue 167-174 (GNVDAGKS). Residues 206–210 (GRTSS) form a G2 region. The G3 stretch occupies residues 252 to 255 (DLAG). Residues 252-256 (DLAGH) and 308-311 (TKID) each bind GTP. Residues 308 to 311 (TKID) are G4. The G5 stretch occupies residues 366–368 (SNV). Positions 573–595 (LLQTTNNSPMNSKPQQIKMQSTK) are enriched in polar residues. Residues 573 to 669 (LLQTTNNSPM…GACMTPASGC (97 aa)) form a disordered region. A Phosphoserine modification is found at Ser-580. Over residues 633-645 (SSSLQPQPKPSSG) the composition is skewed to low complexity. A compositionally biased stretch (basic residues) spans 646–657 (GRRRGGQRHKVK).

It belongs to the TRAFAC class translation factor GTPase superfamily. Classic translation factor GTPase family. GTPBP1 subfamily. As to quaternary structure, interacts with EXOSC2/RRP4, EXOSC3/RRP40, EXOSC5/RRP46, HNRNPD, HNRNPR and SYNCRIP. Identified in a complex with AANAT mRNA, but does not bind mRNA by itself.

It is found in the cytoplasm. In terms of biological role, promotes degradation of target mRNA species. Plays a role in the regulation of circadian mRNA stability. Binds GTP and has GTPase activity. This chain is GTP-binding protein 1 (GTPBP1), found in Bos taurus (Bovine).